The sequence spans 402 residues: Zinc finger protein CONSTANS-LIKE 14 (402 aa).

Zn(2+) contacts are provided by Cys-12, Cys-15, Cys-35, His-40, Cys-55, Cys-58, Cys-78, and His-83. Residues 12 to 54 form a B box-type 1; atypical zinc finger; that stretch reads CEFCGERTAVLFCRADTAKLCLPCDQHVHSANLLSRKHVRSQI. The B box-type 2; atypical zinc finger occupies 55–97; it reads CDNCSKEPVSVRCFTDNLVLCQECDWDVHGSCSSSATHERSAV. Residues 287 to 322 are disordered; that stretch reads SYQQEDSVHSTSTKGQETSKSNNIPAAIHSHKSSND. A compositionally biased stretch (polar residues) spans 295-310; that stretch reads HSTSTKGQETSKSNNI. The stretch at 345–372 forms a coiled coil; it reads VTNADLEQMAQNRDNAMQRYKEKKKTRR. The 43-residue stretch at 357 to 399 folds into the CCT domain; it reads RDNAMQRYKEKKKTRRYDKTIRYETRKARAETRLRVKGRFVKA.

It belongs to the CONSTANS family.

It localises to the nucleus. The protein is Zinc finger protein CONSTANS-LIKE 14 (COL14) of Arabidopsis thaliana (Mouse-ear cress).